We begin with the raw amino-acid sequence, 124 residues long: Translation initiation factor 5A (124 aa).

Lys-36 is modified (hypusine).

It belongs to the eIF-5A family.

It localises to the cytoplasm. Functionally, functions by promoting the formation of the first peptide bond. This Haloquadratum walsbyi (strain DSM 16790 / HBSQ001) protein is Translation initiation factor 5A.